A 426-amino-acid chain; its full sequence is Chaperone SurA (426 aa).

The first 19 residues, 1-19, serve as a signal peptide directing secretion; sequence MGRVLVTIFVLFWPIGSFA. 2 consecutive PpiC domains span residues 169 to 270 and 280 to 379; these read DAQY…KLLD and VTQT…QVLD.

It is found in the periplasm. It carries out the reaction [protein]-peptidylproline (omega=180) = [protein]-peptidylproline (omega=0). Its function is as follows. Chaperone involved in the correct folding and assembly of outer membrane proteins. Recognizes specific patterns of aromatic residues and the orientation of their side chains, which are found more frequently in integral outer membrane proteins. May act in both early periplasmic and late outer membrane-associated steps of protein maturation. The protein is Chaperone SurA of Nitrosococcus oceani (strain ATCC 19707 / BCRC 17464 / JCM 30415 / NCIMB 11848 / C-107).